The following is a 206-amino-acid chain: Large ribosomal subunit protein uL4 (206 aa).

Belongs to the universal ribosomal protein uL4 family. As to quaternary structure, part of the 50S ribosomal subunit.

In terms of biological role, one of the primary rRNA binding proteins, this protein initially binds near the 5'-end of the 23S rRNA. It is important during the early stages of 50S assembly. It makes multiple contacts with different domains of the 23S rRNA in the assembled 50S subunit and ribosome. Its function is as follows. Forms part of the polypeptide exit tunnel. In Xanthobacter autotrophicus (strain ATCC BAA-1158 / Py2), this protein is Large ribosomal subunit protein uL4.